Reading from the N-terminus, the 26-residue chain is Coenzyme PQQ synthesis protein A (26 aa).

A cross-link (pyrroloquinoline quinone (Glu-Tyr)) is located at residues 16 to 20; it reads EINSY.

This sequence belongs to the PqqA family.

The protein operates within cofactor biosynthesis; pyrroloquinoline quinone biosynthesis. In terms of biological role, required for coenzyme pyrroloquinoline quinone (PQQ) biosynthesis. PQQ is probably formed by cross-linking a specific glutamate to a specific tyrosine residue and excising these residues from the peptide. This chain is Coenzyme PQQ synthesis protein A, found in Gluconacetobacter diazotrophicus (strain ATCC 49037 / DSM 5601 / CCUG 37298 / CIP 103539 / LMG 7603 / PAl5).